A 182-amino-acid chain; its full sequence is MELGELLYNKSEYIETASGNKVSRQSVLCGSQNIVLNGKTIVMNDCIIRGDLANVRVGRHCVVKSRSVIRPPFKKFSKGVAFFPLHIGDHVFIEEDCVVNAAQIGSYVHVGKNCVIGRRCVLKDCCKILDNTVLPPETVVPPFTVFSGCPGLFSGELPECTQELMIDVTKSYYQKFLPLTRI.

At Met-1 the chain carries N-acetylmethionine.

Belongs to the dynactin subunits 5/6 family. Dynactin subunit 5 subfamily. As to quaternary structure, subunit of dynactin, a multiprotein complex part of a tripartite complex with dynein and a adapter, such as BICDL1, BICD2 or HOOK3. The dynactin complex is built around ACTR1A/ACTB filament and consists of an actin-related filament composed of a shoulder domain, a pointed end and a barbed end. Its length is defined by its flexible shoulder domain. The soulder is composed of 2 DCTN1 subunits, 4 DCTN2 and 2 DCTN3. The 4 DCNT2 (via N-terminus) bind the ACTR1A filament and act as molecular rulers to determine the length. The pointed end is important for binding dynein-dynactin cargo adapters. Consists of 4 subunits: ACTR10, DCNT4, DCTN5 and DCTN6. Within the complex DCTN6 forms a heterodimer with DCTN5. The barbed end is composed of a CAPZA1:CAPZB heterodimers, which binds ACTR1A/ACTB filament and dynactin and stabilizes dynactin. Interacts with N4BP2L1.

The protein resides in the cytoplasm. Its subcellular location is the cytoskeleton. It localises to the chromosome. The protein localises to the centromere. It is found in the kinetochore. Its function is as follows. Part of the dynactin complex that activates the molecular motor dynein for ultra-processive transport along microtubules. This Pongo abelii (Sumatran orangutan) protein is Dynactin subunit 5 (DCTN5).